A 282-amino-acid polypeptide reads, in one-letter code: Probable endonuclease 4 (282 aa).

Positions 66, 106, 143, 177, 180, 214, 227, 229, and 259 each coordinate Zn(2+).

This sequence belongs to the AP endonuclease 2 family. The cofactor is Zn(2+).

The catalysed reaction is Endonucleolytic cleavage to 5'-phosphooligonucleotide end-products.. In terms of biological role, endonuclease IV plays a role in DNA repair. It cleaves phosphodiester bonds at apurinic or apyrimidinic (AP) sites, generating a 3'-hydroxyl group and a 5'-terminal sugar phosphate. The sequence is that of Probable endonuclease 4 from Nitratidesulfovibrio vulgaris (strain DP4) (Desulfovibrio vulgaris).